The sequence spans 104 residues: ATP-dependent Clp protease adapter protein ClpS (104 aa).

This sequence belongs to the ClpS family. Binds to the N-terminal domain of the chaperone ClpA.

In terms of biological role, involved in the modulation of the specificity of the ClpAP-mediated ATP-dependent protein degradation. The sequence is that of ATP-dependent Clp protease adapter protein ClpS from Neisseria gonorrhoeae (strain ATCC 700825 / FA 1090).